The following is a 177-amino-acid chain: Archaemetzincin (177 aa).

His-129 is a Zn(2+) binding site. The active-site Proton acceptor is Glu-130. Zn(2+)-binding residues include His-133, His-139, Cys-140, Cys-145, Cys-164, and Cys-167.

This sequence belongs to the peptidase M54 family. As to quaternary structure, monomer. It depends on Zn(2+) as a cofactor.

Its function is as follows. Probable zinc metalloprotease whose natural substrate is unknown. This is Archaemetzincin from Sulfolobus acidocaldarius (strain ATCC 33909 / DSM 639 / JCM 8929 / NBRC 15157 / NCIMB 11770).